The following is a 137-amino-acid chain: Basic phospholipase A2 homolog 4a (137 aa).

Positions Met-1–Gly-16 are cleaved as a signal peptide. 7 disulfide bridges follow: Cys-42-Cys-131, Cys-44-Cys-60, Cys-59-Cys-111, Cys-65-Cys-137, Cys-66-Cys-104, Cys-73-Cys-97, and Cys-91-Cys-102. The interval Lys-121 to Lys-133 is important for membrane-damaging activities in eukaryotes and bacteria; heparin-binding.

The protein belongs to the phospholipase A2 family. Group II subfamily. K49 sub-subfamily. Homodimer; non-covalently linked. Expressed by the venom gland.

It localises to the secreted. Snake venom phospholipase A2 homolog that lacks enzymatic activity. Is myotoxic and displays edema-inducing activities. A model of myotoxic mechanism has been proposed: an apo Lys49-PLA2 is activated by the entrance of a hydrophobic molecule (e.g. fatty acid) at the hydrophobic channel of the protein leading to a reorientation of a monomer. This reorientation causes a transition between 'inactive' to 'active' states, causing alignment of C-terminal and membrane-docking sites (MDoS) side-by-side and putting the membrane-disruption sites (MDiS) in the same plane, exposed to solvent and in a symmetric position for both monomers. The MDoS region stabilizes the toxin on membrane by the interaction of charged residues with phospholipid head groups. Subsequently, the MDiS region destabilizes the membrane with penetration of hydrophobic residues. This insertion causes a disorganization of the membrane, allowing an uncontrolled influx of ions (i.e. calcium and sodium), and eventually triggering irreversible intracellular alterations and cell death. This is Basic phospholipase A2 homolog 4a from Bothrops asper (Terciopelo).